A 258-amino-acid polypeptide reads, in one-letter code: Imidazole glycerol phosphate synthase subunit HisF (258 aa).

Active-site residues include D11 and D130.

This sequence belongs to the HisA/HisF family. As to quaternary structure, heterodimer of HisH and HisF.

The protein localises to the cytoplasm. It carries out the reaction 5-[(5-phospho-1-deoxy-D-ribulos-1-ylimino)methylamino]-1-(5-phospho-beta-D-ribosyl)imidazole-4-carboxamide + L-glutamine = D-erythro-1-(imidazol-4-yl)glycerol 3-phosphate + 5-amino-1-(5-phospho-beta-D-ribosyl)imidazole-4-carboxamide + L-glutamate + H(+). It functions in the pathway amino-acid biosynthesis; L-histidine biosynthesis; L-histidine from 5-phospho-alpha-D-ribose 1-diphosphate: step 5/9. IGPS catalyzes the conversion of PRFAR and glutamine to IGP, AICAR and glutamate. The HisF subunit catalyzes the cyclization activity that produces IGP and AICAR from PRFAR using the ammonia provided by the HisH subunit. The chain is Imidazole glycerol phosphate synthase subunit HisF from Salmonella arizonae (strain ATCC BAA-731 / CDC346-86 / RSK2980).